Here is a 290-residue protein sequence, read N- to C-terminus: Porphobilinogen deaminase (290 aa).

C237 is modified (S-(dipyrrolylmethanemethyl)cysteine).

It belongs to the HMBS family. In terms of assembly, monomer. Requires dipyrromethane as cofactor.

It catalyses the reaction 4 porphobilinogen + H2O = hydroxymethylbilane + 4 NH4(+). It functions in the pathway porphyrin-containing compound metabolism; protoporphyrin-IX biosynthesis; coproporphyrinogen-III from 5-aminolevulinate: step 2/4. Functionally, tetrapolymerization of the monopyrrole PBG into the hydroxymethylbilane pre-uroporphyrinogen in several discrete steps. The chain is Porphobilinogen deaminase from Clostridium botulinum (strain 657 / Type Ba4).